Reading from the N-terminus, the 451-residue chain is Tubulin beta-4 chain (451 aa).

Glutamine 11, glutamate 69, serine 138, glycine 142, threonine 143, glycine 144, asparagine 204, and asparagine 226 together coordinate GTP. Mg(2+) is bound at residue glutamate 69. The segment covering 417–427 (DLVSEYQQYQD) has biased composition (polar residues). Residues 417–451 (DLVSEYQQYQDATAEEEGEYDEDDGGYGDEDDGMM) are disordered. The segment covering 429-451 (TAEEEGEYDEDDGGYGDEDDGMM) has biased composition (acidic residues).

It belongs to the tubulin family. Dimer of alpha and beta chains. A typical microtubule is a hollow water-filled tube with an outer diameter of 25 nm and an inner diameter of 15 nM. Alpha-beta heterodimers associate head-to-tail to form protofilaments running lengthwise along the microtubule wall with the beta-tubulin subunit facing the microtubule plus end conferring a structural polarity. Microtubules usually have 13 protofilaments but different protofilament numbers can be found in some organisms and specialized cells. Requires Mg(2+) as cofactor.

It localises to the cytoplasm. Its subcellular location is the cytoskeleton. Functionally, tubulin is the major constituent of microtubules, a cylinder consisting of laterally associated linear protofilaments composed of alpha- and beta-tubulin heterodimers. Microtubules grow by the addition of GTP-tubulin dimers to the microtubule end, where a stabilizing cap forms. Below the cap, tubulin dimers are in GDP-bound state, owing to GTPase activity of alpha-tubulin. The protein is Tubulin beta-4 chain (TUBB4) of Oomycete-like sp. (strain MacKay2000).